The primary structure comprises 139 residues: Non-structural protein 1 (139 aa).

The DLNP; interaction with MAP1B signature appears at Asp136 to Ser139.

The protein belongs to the pneumovirus non-structural protein 1 family. Monomer. Homomultimer. Heteromultimer with NS2. Interacts with the matrix protein M. Interacts with host ELOC and CUL2; this interaction allows NS1 to form an active E3 ligase with ELOC and CUL2. Interacts with host IRF3; this interaction leads to the disrupted association of IRF3 with CREBBP and thus reduced binding of IRF3 to the IFN-beta promoter. Interacts with host MAVS; this interaction prevents MAVS binding to RIGI and inhibits signaling pathway leading to interferon production. Interacts with host MAP1B/microtubule-associated protein 1B. Interacts with host TRIM25 (via SPRY domain); this interaction suppresses RIGI ubiquitination and results in decreased interaction between RIGI and MAVS.

It is found in the host cytoplasm. It localises to the host mitochondrion. The protein resides in the host nucleus. Functionally, plays a major role in antagonizing the type I IFN-mediated antiviral response by degrading or inhibiting multiple cellular factors required for either IFN induction or response pathways. Acts cooperatively with NS2 to repress activation and nuclear translocation of host IFN-regulatory factor IRF3. Also disrupts the association of IRF3 with CREBBP. Interacts with host mitochondrial-associated membrane (MAM) MAVS and prevents the interaction with RIGI. Interacts with TRIM25 to suppress TRIM25-mediated RIGI ubiquitination and thereby RIGI-MAVS interaction. Together with NS2, participates in the proteasomal degradation of host STAT2, IRF3, IRF7, TBK1 and RIGI through a NS-degradasome involving CUL2 and Elongin-C. The degradasome requires an intact mitochondrial MAVS. Decreases the levels of host TRAF3 and IKBKE/IKK-epsilon. As functions other than disruptions of the type I IFN-mediated antiviral signaling pathways, induces host SOCS1 and SOCS3 expression. Suppresses premature apoptosis by an NF-kappa-B-dependent, interferon-independent mechanism and thus facilitates virus growth. Additionally, NS1 may serve some inhibitory role in viral transcription and RNA replication. Suppresses proliferation and activation of host CD103+ CD8+ cytotoxic T-lymphocytes and Th17 helper T-lymphocytes. The sequence is that of Non-structural protein 1 (1C) from Human respiratory syncytial virus B (strain 18537).